A 1108-amino-acid chain; its full sequence is Ubiquitin carboxyl-terminal hydrolase 5 (1108 aa).

The region spanning 55–187 (FQRFTWHIKS…DGALLLTAYV (133 aa)) is the MATH domain. Residues C120 and C222 each act as nucleophile in the active site. The USP domain maps to 213 to 528 (VGLKNQGATC…SAYMLLYLRK (316 aa)). Catalysis depends on H464, which acts as the Proton acceptor.

Belongs to the peptidase C19 family.

It localises to the nucleus. The enzyme catalyses Thiol-dependent hydrolysis of ester, thioester, amide, peptide and isopeptide bonds formed by the C-terminal Gly of ubiquitin (a 76-residue protein attached to proteins as an intracellular targeting signal).. In terms of biological role, hydrolase that deubiquitinates target proteins. Cleaves the UBL propeptide in sde2. In Schizosaccharomyces pombe (strain 972 / ATCC 24843) (Fission yeast), this protein is Ubiquitin carboxyl-terminal hydrolase 5 (ubp5).